Reading from the N-terminus, the 31-residue chain is Photosystem II reaction center protein T (31 aa).

Met-1 is modified (N-formylmethionine). Residues 3-23 traverse the membrane as a helical segment; sequence SVAYILVLTMALAVLFFAIAF.

It belongs to the PsbT family. As to quaternary structure, PSII is composed of 1 copy each of membrane proteins PsbA, PsbB, PsbC, PsbD, PsbE, PsbF, PsbH, PsbI, PsbJ, PsbK, PsbL, PsbM, PsbT, PsbX, PsbY, PsbZ, Psb30/Ycf12, peripheral proteins PsbO, CyanoQ (PsbQ), PsbU, PsbV and a large number of cofactors. It forms dimeric complexes.

The protein localises to the cellular thylakoid membrane. Found at the monomer-monomer interface of the photosystem II (PS II) dimer, plays a role in assembly and dimerization of PSII. PSII is a light-driven water plastoquinone oxidoreductase, using light energy to abstract electrons from H(2)O, generating a proton gradient subsequently used for ATP formation. This Synechocystis sp. (strain ATCC 27184 / PCC 6803 / Kazusa) protein is Photosystem II reaction center protein T.